The primary structure comprises 155 residues: 3-hydroxyacyl-[acyl-carrier-protein] dehydratase FabZ (155 aa).

His-58 is a catalytic residue.

Belongs to the thioester dehydratase family. FabZ subfamily.

The protein resides in the cytoplasm. The catalysed reaction is a (3R)-hydroxyacyl-[ACP] = a (2E)-enoyl-[ACP] + H2O. Its function is as follows. Involved in unsaturated fatty acids biosynthesis. Catalyzes the dehydration of short chain beta-hydroxyacyl-ACPs and long chain saturated and unsaturated beta-hydroxyacyl-ACPs. This Rhizobium etli (strain ATCC 51251 / DSM 11541 / JCM 21823 / NBRC 15573 / CFN 42) protein is 3-hydroxyacyl-[acyl-carrier-protein] dehydratase FabZ.